A 188-amino-acid polypeptide reads, in one-letter code: Peptide deformylase (188 aa).

Cys-109 and His-152 together coordinate Fe cation. Glu-153 is an active-site residue. Residue His-156 coordinates Fe cation.

It belongs to the polypeptide deformylase family. It depends on Fe(2+) as a cofactor.

It carries out the reaction N-terminal N-formyl-L-methionyl-[peptide] + H2O = N-terminal L-methionyl-[peptide] + formate. Its function is as follows. Removes the formyl group from the N-terminal Met of newly synthesized proteins. Requires at least a dipeptide for an efficient rate of reaction. N-terminal L-methionine is a prerequisite for activity but the enzyme has broad specificity at other positions. The sequence is that of Peptide deformylase from Chloroflexus aurantiacus (strain ATCC 29366 / DSM 635 / J-10-fl).